The chain runs to 329 residues: CDP-6-deoxy-L-threo-D-glycero-4-hexulose-3-dehydrase reductase (329 aa).

The 92-residue stretch at 2-93 (SLNVKLHPSG…ELDVNYYPEL (92 aa)) folds into the 2Fe-2S ferredoxin-type domain. [2Fe-2S] cluster-binding residues include Cys37, Cys42, Cys45, and Cys75. The region spanning 98–197 (KKTYPCKLDS…EGPQGTFFVR (100 aa)) is the FAD-binding FR-type domain.

In terms of assembly, monomer.

The protein operates within nucleotide-sugar biosynthesis; CDP-ascarylose biosynthesis. Its pathway is bacterial outer membrane biogenesis; lipopolysaccharide biosynthesis. Participates in the conversion of CDP-6-deoxy-D-glycero-L-threo-4-hexulose to 3,6-dideoxy-D-glycero-D-glycero-4-hexulose together with CDP-6-deoxy-D-glycero-L-threo-4-hexulose-3-dehydrase (E1) in two consecutive steps. The detailed mechanism of E3 is not yet resolved. The chain is CDP-6-deoxy-L-threo-D-glycero-4-hexulose-3-dehydrase reductase (ascD) from Yersinia pestis.